The primary structure comprises 499 residues: UPF0159 protein Ta1429 (499 aa).

2 ThyX domains span residues 1–246 (MIDR…ALSQ) and 271–476 (EKVR…IKFV).

Belongs to the UPF0159 family.

The chain is UPF0159 protein Ta1429 from Thermoplasma acidophilum (strain ATCC 25905 / DSM 1728 / JCM 9062 / NBRC 15155 / AMRC-C165).